Here is a 303-residue protein sequence, read N- to C-terminus: DCN1-like protein 3 (303 aa).

The disordered stretch occupies residues 1–40 (MGQCVTKCKNPSSTLGSKNGERESSKPHKRSSSHKEEHMS). The N-myristoyl glycine moiety is linked to residue G2. A DCUN1 domain is found at 85 to 277 (SSLQRIEELF…LFDTFVEWEM (193 aa)).

As to quaternary structure, may interact (via the DCUN1 domain) with unneddylated cullins.

The protein localises to the cell membrane. Its subcellular location is the cytoplasm. The protein resides in the nucleus. It is found in the perinuclear region. Functionally, contributes to the neddylation of all cullins by transferring NEDD8 from N-terminally acetylated NEDD8-conjugating E2s enzyme to different cullin C-terminal domain-RBX complexes. At the cell membrane, can promote and as well inhibit cullins neddylation. The chain is DCN1-like protein 3 from Xenopus laevis (African clawed frog).